Here is a 236-residue protein sequence, read N- to C-terminus: V-set and transmembrane domain-containing protein 1 (236 aa).

Positions 1–16 are cleaved as a signal peptide; the sequence is MTAEFLSLLCLGLCLG. The Extracellular portion of the chain corresponds to 17–135; sequence YEDEKKNEKP…APSMKTDTRT (119 aa). The Ig-like V-type domain maps to 27-114; that stretch reads PKPSLHAWPS…EWSESSEHLQ (88 aa). 2 N-linked (GlcNAc...) asparagine glycosylation sites follow: N44 and N55. An intrachain disulfide couples C49 to C96. A helical membrane pass occupies residues 136 to 156; it reads IFVAIFSCISILLLFLSVFII. Residues 157-236 lie on the Cytoplasmic side of the membrane; sequence YRCSQHSSSS…GSHEYAALKV (80 aa). The interval 166 to 200 is disordered; the sequence is SEESTKRTSHSKLPEQEAAEADLSNMERVSLSTAD. 2 short sequence motifs (ITIM motif) span residues 204–209 and 229–234; these read VTYAEL and HEYAAL. Residues 215-236 are disordered; that stretch reads SEAASDTTQEPPGSHEYAALKV.

Post-translationally, isoform 2 is N-glycosylated. Expressed on myeloid (neutrophils, eosinophils and monocytes) but not on lymphoid cells.

The protein localises to the membrane. It is found in the secreted. Functionally, behaves as a cytokine, promoting IL17A secretion by CD4+ T-cells, and differentiation and activation of IL17 producing helper T-cells (TH17). Inhibitory immune receptor involved in the regulation of phagocytes. The chain is V-set and transmembrane domain-containing protein 1 (VSTM1) from Homo sapiens (Human).